The sequence spans 248 residues: Probable transcriptional regulatory protein FTW_1073 (248 aa).

This sequence belongs to the TACO1 family.

Its subcellular location is the cytoplasm. This chain is Probable transcriptional regulatory protein FTW_1073, found in Francisella tularensis subsp. tularensis (strain WY96-3418).